A 504-amino-acid polypeptide reads, in one-letter code: 2,3-bisphosphoglycerate-independent phosphoglycerate mutase (504 aa).

2 residues coordinate Mn(2+): aspartate 11 and serine 61. Serine 61 acts as the Phosphoserine intermediate in catalysis. Substrate contacts are provided by residues histidine 122, 152–153 (RD), arginine 183, arginine 189, 255–258 (RNDR), and lysine 329. 5 residues coordinate Mn(2+): aspartate 396, histidine 400, aspartate 437, histidine 438, and histidine 455.

This sequence belongs to the BPG-independent phosphoglycerate mutase family. In terms of assembly, monomer. The cofactor is Mn(2+).

It carries out the reaction (2R)-2-phosphoglycerate = (2R)-3-phosphoglycerate. It functions in the pathway carbohydrate degradation; glycolysis; pyruvate from D-glyceraldehyde 3-phosphate: step 3/5. Its function is as follows. Catalyzes the interconversion of 2-phosphoglycerate and 3-phosphoglycerate. The sequence is that of 2,3-bisphosphoglycerate-independent phosphoglycerate mutase from Bacteroides thetaiotaomicron (strain ATCC 29148 / DSM 2079 / JCM 5827 / CCUG 10774 / NCTC 10582 / VPI-5482 / E50).